Consider the following 197-residue polypeptide: Nucleoid occlusion factor SlmA (197 aa).

The 61-residue stretch at 7 to 67 (INRREHILQC…GLIEFIEESL (61 aa)) folds into the HTH tetR-type domain. The segment at residues 30–49 (TTAKLASEVGVSEAALYRHF) is a DNA-binding region (H-T-H motif). The stretch at 110-130 (ALLGENERLRSRISSLFAKIE) forms a coiled coil.

Belongs to the nucleoid occlusion factor SlmA family. In terms of assembly, homodimer. Interacts with FtsZ.

It is found in the cytoplasm. The protein resides in the nucleoid. Functionally, required for nucleoid occlusion (NO) phenomenon, which prevents Z-ring formation and cell division over the nucleoid. Acts as a DNA-associated cell division inhibitor that binds simultaneously chromosomal DNA and FtsZ, and disrupts the assembly of FtsZ polymers. SlmA-DNA-binding sequences (SBS) are dispersed on non-Ter regions of the chromosome, preventing FtsZ polymerization at these regions. The polypeptide is Nucleoid occlusion factor SlmA (Shewanella sp. (strain W3-18-1)).